Here is a 265-residue protein sequence, read N- to C-terminus: Mlc titration factor A (265 aa).

Positions 111, 148, 152, and 211 each coordinate Zn(2+).

This sequence belongs to the MtfA family. In terms of assembly, interacts with Mlc. The cofactor is Zn(2+).

It is found in the cytoplasm. Its function is as follows. Involved in the modulation of the activity of the glucose-phosphotransferase system (glucose-PTS). Interacts with the transcriptional repressor Mlc, preventing its interaction with DNA and leading to the modulation of expression of genes regulated by Mlc, including ptsG, which encodes the PTS system glucose-specific EIICB component. Shows zinc-dependent metallopeptidase activity. The sequence is that of Mlc titration factor A from Salmonella gallinarum (strain 287/91 / NCTC 13346).